The chain runs to 724 residues: Membrane protein YdfJ (724 aa).

A run of 12 helical transmembrane segments spans residues 17 to 37 (IKAI…AVTL), 179 to 199 (IVGI…LLIA), 200 to 220 (GLPI…VLIG), 231 to 251 (LSLA…FIFT), 277 to 297 (AVVF…VVNI), 309 to 329 (LSVL…LSIA), 360 to 380 (IMLS…SMHL), 512 to 532 (AIPV…TIVF), 539 to 559 (LVAV…CVFV), 575 to 595 (GPIL…LAMD), 627 to 647 (PVVT…IFAG), and 655 to 675 (GLAL…TLIP).

This sequence belongs to the resistance-nodulation-cell division (RND) (TC 2.A.6) family. MmpL subfamily.

Its subcellular location is the cell membrane. The chain is Membrane protein YdfJ (ydfJ) from Bacillus subtilis (strain 168).